A 929-amino-acid polypeptide reads, in one-letter code: Isoleucine--tRNA ligase (929 aa).

The short motif at 58-68 is the 'HIGH' region element; sequence PYANGDIHIGH. Residue Glu-563 participates in L-isoleucyl-5'-AMP binding. The 'KMSKS' region motif lies at 605–609; that stretch reads KMSKS. Lys-608 serves as a coordination point for ATP. 4 residues coordinate Zn(2+): Cys-892, Cys-895, Cys-912, and Cys-915.

It belongs to the class-I aminoacyl-tRNA synthetase family. IleS type 1 subfamily. As to quaternary structure, monomer. Zn(2+) serves as cofactor.

The protein localises to the cytoplasm. The catalysed reaction is tRNA(Ile) + L-isoleucine + ATP = L-isoleucyl-tRNA(Ile) + AMP + diphosphate. Functionally, catalyzes the attachment of isoleucine to tRNA(Ile). As IleRS can inadvertently accommodate and process structurally similar amino acids such as valine, to avoid such errors it has two additional distinct tRNA(Ile)-dependent editing activities. One activity is designated as 'pretransfer' editing and involves the hydrolysis of activated Val-AMP. The other activity is designated 'posttransfer' editing and involves deacylation of mischarged Val-tRNA(Ile). This Neisseria meningitidis serogroup C (strain 053442) protein is Isoleucine--tRNA ligase.